The sequence spans 355 residues: Guanine nucleotide-binding protein alpha-12 subunit (355 aa).

Residues 28 to 355 (RQINLLLLGS…EQNLKTLMMQ (328 aa)) enclose the G-alpha domain. A G1 motif region spans residues 31–44 (NLLLLGSGESGKST). GTP-binding positions include 36 to 43 (GSGESGKS), 176 to 182 (LFCRKAT), 201 to 205 (DVGGQ), 270 to 273 (NKND), and alanine 327. Mg(2+) is bound by residues serine 43 and threonine 182. Residues 174–182 (DILFCRKAT) form a G2 motif region. The tract at residues 197–206 (FRFIDVGGQR) is G3 motif. Residues 266–273 (ILFMNKND) form a G4 motif region. The tract at residues 325–330 (TTAVDT) is G5 motif.

It belongs to the G-alpha family. In terms of assembly, g proteins are composed of 3 units; alpha, beta and gamma. The alpha chain contains the guanine nucleotide binding site.

Guanine nucleotide-binding proteins (G proteins) are involved as modulators or transducers in various transmembrane signaling systems. May play a role in resistance to fungal infection in the epidermis by regulating the up-regulation of several antimicrobial peptides of the NLP and CNC families. Upstream of plc-3, egl-8, tpa-1 and the p38-like pathway, required for the expression of antimicrobial peptide nlp-29 in the epidermis in response to fungal infection or physical injury. This is Guanine nucleotide-binding protein alpha-12 subunit (gpa-12) from Caenorhabditis briggsae.